Here is a 404-residue protein sequence, read N- to C-terminus: Argininosuccinate synthase (404 aa).

Residue 9-17 (AYSGGLDTS) participates in ATP binding. Y86 serves as a coordination point for L-citrulline. G116 provides a ligand contact to ATP. L-aspartate contacts are provided by T118, N122, and D123. Residue N122 coordinates L-citrulline. L-citrulline contacts are provided by R126, S174, S183, E259, and Y271.

This sequence belongs to the argininosuccinate synthase family. Type 1 subfamily. As to quaternary structure, homotetramer.

The protein localises to the cytoplasm. The enzyme catalyses L-citrulline + L-aspartate + ATP = 2-(N(omega)-L-arginino)succinate + AMP + diphosphate + H(+). It functions in the pathway amino-acid biosynthesis; L-arginine biosynthesis; L-arginine from L-ornithine and carbamoyl phosphate: step 2/3. This is Argininosuccinate synthase from Listeria welshimeri serovar 6b (strain ATCC 35897 / DSM 20650 / CCUG 15529 / CIP 8149 / NCTC 11857 / SLCC 5334 / V8).